Reading from the N-terminus, the 163-residue chain is MKAKGFVHKYGDNVDTDVIIPARYLNTANHKELAAHCMEDIDKDFVKKVKTGDIMVGGDNFGCGSSREHAPIAIKESGISCVIASSFARIFYRNSINIGLAILECDEASKKISDNDEVEVDFDNGLIKNITKNETYKAEPFPEFIKKIINSNGLLNSIKNSKG.

The protein belongs to the LeuD family. LeuD type 2 subfamily. Heterodimer of LeuC and LeuD.

The catalysed reaction is (2R,3S)-3-isopropylmalate = (2S)-2-isopropylmalate. It participates in amino-acid biosynthesis; L-leucine biosynthesis; L-leucine from 3-methyl-2-oxobutanoate: step 2/4. In terms of biological role, catalyzes the isomerization between 2-isopropylmalate and 3-isopropylmalate, via the formation of 2-isopropylmaleate. The polypeptide is 3-isopropylmalate dehydratase small subunit (Brachyspira hyodysenteriae (strain ATCC 49526 / WA1)).